Here is a 96-residue protein sequence, read N- to C-terminus: Antitoxin ParD4 (96 aa).

It belongs to the ParD antitoxin family.

Functionally, antitoxin component of a type II toxin-antitoxin (TA) system. Neutralizes the effect of cognate toxin ParE4, but no other RelE or ParE toxin. The sequence is that of Antitoxin ParD4 (parD4) from Caulobacter vibrioides (strain ATCC 19089 / CIP 103742 / CB 15) (Caulobacter crescentus).